Consider the following 254-residue polypeptide: Alcohol dehydrogenase 2 (254 aa).

An NAD(+)-binding site is contributed by 10 to 33 (FVAGLGGIGLDTSREIVKSGPKNL). A substrate-binding site is contributed by S138. The Proton acceptor role is filled by Y151.

The protein belongs to the short-chain dehydrogenases/reductases (SDR) family. As to quaternary structure, homodimer.

It catalyses the reaction a primary alcohol + NAD(+) = an aldehyde + NADH + H(+). The enzyme catalyses a secondary alcohol + NAD(+) = a ketone + NADH + H(+). This is Alcohol dehydrogenase 2 (Adh2) from Drosophila montana (Fruit fly).